A 274-amino-acid chain; its full sequence is Octanoyltransferase LipM (274 aa).

The BPL/LPL catalytic domain occupies 32-244 (GEVPPTLRFY…GFARALGLTL (213 aa)). Cys146 acts as the Acyl-thioester intermediate in catalysis.

It belongs to the octanoyltransferase LipM family. In terms of assembly, monomer.

It carries out the reaction octanoyl-[ACP] + L-lysyl-[protein] = N(6)-octanoyl-L-lysyl-[protein] + holo-[ACP] + H(+). Its pathway is protein modification; protein lipoylation via endogenous pathway; protein N(6)-(lipoyl)lysine from octanoyl-[acyl-carrier-protein]. Catalyzes the transfer of endogenously produced octanoic acid from octanoyl-acyl-carrier-protein onto the lipoyl domain of GcvH, an intermediate carrier during protein lipoylation. This Symbiobacterium thermophilum (strain DSM 24528 / JCM 14929 / IAM 14863 / T) protein is Octanoyltransferase LipM.